The primary structure comprises 462 residues: MGCIVCSDGIVCRLKFLPFAAGANRLAGGFLKISEVLVKVGDGVHTLLLDRPIVRDGRKFDAPLLWMVVLMTAFGLLMIYSASVYLASKEGGDQFFYLTRQAGFVVAGLIASGFLWFLCRMRTWRRLVPWIFALSGLLLVAVLIAGREINGATRWIPLGPLNFQPTELFKLAVILYLASLFTRREEVLRSMESLGWQSIWRGTANLIMSATNPQARRETLEMYGRFRAIILPIMLVAFGLVLIMVQPDFGSFVVITVITVGMLFLAGLPWKYFFVLVGSVLGGMVLMITAAPYRVQRVVAFLDPWKDPQGAGYQLTHSLMAIGRGEWFGMGLGASLSKRGFLPEAHTDFIFAIIAEEFGFFGMCVLIFCYGWLVVRAFSIGKQSRDLGLTFNAYIASGIGIWIGIQSFFNIGVNIGALPTKGLTLPLMSYGGSSVFFMLISMMLLLRIDYENRRKMRGYRVE.

The Cytoplasmic portion of the chain corresponds to 1–63 (MGCIVCSDGI…VRDGRKFDAP (63 aa)). Residues 64–84 (LLWMVVLMTAFGLLMIYSASV) form a helical membrane-spanning segment. Residues 85 to 97 (YLASKEGGDQFFY) lie on the Periplasmic side of the membrane. The chain crosses the membrane as a helical span at residues 98 to 118 (LTRQAGFVVAGLIASGFLWFL). The Cytoplasmic segment spans residues 119 to 125 (CRMRTWR). Residues 126-146 (RLVPWIFALSGLLLVAVLIAG) form a helical membrane-spanning segment. Over 147-160 (REINGATRWIPLGP) the chain is Periplasmic. A helical membrane pass occupies residues 161–181 (LNFQPTELFKLAVILYLASLF). Topologically, residues 182–227 (TRREEVLRSMESLGWQSIWRGTANLIMSATNPQARRETLEMYGRFR) are cytoplasmic. 2 helical membrane-spanning segments follow: residues 228–248 (AIIL…VQPD) and 249–269 (FGSF…AGLP). At 270–271 (WK) the chain is on the cytoplasmic side. Residues 272 to 292 (YFFVLVGSVLGGMVLMITAAP) traverse the membrane as a helical segment. Residues 293-348 (YRVQRVVAFLDPWKDPQGAGYQLTHSLMAIGRGEWFGMGLGASLSKRGFLPEAHTD) are Periplasmic-facing. Residues 349–369 (FIFAIIAEEFGFFGMCVLIFC) form a helical membrane-spanning segment. Over 370–386 (YGWLVVRAFSIGKQSRD) the chain is Cytoplasmic. Residues 387–409 (LGLTFNAYIASGIGIWIGIQSFF) form a helical membrane-spanning segment. Topologically, residues 410 to 424 (NIGVNIGALPTKGLT) are periplasmic. A helical transmembrane segment spans residues 425 to 445 (LPLMSYGGSSVFFMLISMMLL). At 446–462 (LRIDYENRRKMRGYRVE) the chain is on the cytoplasmic side.

It belongs to the SEDS family. FtsW subfamily.

The protein resides in the cell inner membrane. It catalyses the reaction [GlcNAc-(1-&gt;4)-Mur2Ac(oyl-L-Ala-gamma-D-Glu-L-Lys-D-Ala-D-Ala)](n)-di-trans,octa-cis-undecaprenyl diphosphate + beta-D-GlcNAc-(1-&gt;4)-Mur2Ac(oyl-L-Ala-gamma-D-Glu-L-Lys-D-Ala-D-Ala)-di-trans,octa-cis-undecaprenyl diphosphate = [GlcNAc-(1-&gt;4)-Mur2Ac(oyl-L-Ala-gamma-D-Glu-L-Lys-D-Ala-D-Ala)](n+1)-di-trans,octa-cis-undecaprenyl diphosphate + di-trans,octa-cis-undecaprenyl diphosphate + H(+). It functions in the pathway cell wall biogenesis; peptidoglycan biosynthesis. Peptidoglycan polymerase that is essential for cell division. The chain is Probable peptidoglycan glycosyltransferase FtsW from Neisseria gonorrhoeae (strain NCCP11945).